A 141-amino-acid polypeptide reads, in one-letter code: MAPRGKRLSSTPLEILFFLNGWYYATYFLLELFIFLYKGLLLPYPTANLVLDVVMLFLYLGVEVIRLFFGTKGNLCQRKMPLGISVALTFPSTMMASYYLLLQTYVLRLEAIMNSILLFFCGSELLLEVLTLTAFSSMDRM.

A run of 4 helical transmembrane segments spans residues 15–35 (ILFFLNGWYYATYFLLELFIF), 49–69 (LVLDVVMLFLYLGVEVIRLFF), 82–102 (LGISVALTFPSTMMASYYLLL), and 115–135 (SILLFFCGSELLLEVLTLTAF).

In terms of assembly, part of the tectonic-like complex (also named B9 complex). Interacts with TMEM107.

The protein localises to the membrane. Its subcellular location is the cytoplasm. It localises to the cytoskeleton. It is found in the cilium basal body. In terms of biological role, part of the tectonic-like complex which is required for tissue-specific ciliogenesis and may regulate ciliary membrane composition. This Bos taurus (Bovine) protein is Transmembrane protein 216 (TMEM216).